Reading from the N-terminus, the 257-residue chain is Serine/arginine-rich splicing factor 1 (257 aa).

Ser-2 carries the N-acetylserine modification. Residues 16-91 (CRIYVGNLPP…YRLRVEFPRS (76 aa)) enclose the RRM 1 domain. Residues 88–116 (FPRSGRGTGRGGGGGGGGGAPRGRYGPPS) form a disordered region. Over residues 93-108 (RGTGRGGGGGGGGGAP) the composition is skewed to gly residues. Residues 121-195 (YRVIVSGLPP…ETAYIRVKVD (75 aa)) form the RRM 2 domain.

It localises to the cytoplasm. Its subcellular location is the nucleus speckle. Functionally, may play a role in preventing exon skipping, ensuring the accuracy of splicing and regulating alternative splicing. The sequence is that of Serine/arginine-rich splicing factor 1 (SRSF1) from Gallus gallus (Chicken).